Reading from the N-terminus, the 466-residue chain is Light-independent protochlorophyllide reductase subunit N (466 aa).

Residues Cys-24, Cys-49, and Cys-109 each contribute to the [4Fe-4S] cluster site.

This sequence belongs to the BchN/ChlN family. In terms of assembly, protochlorophyllide reductase is composed of three subunits; ChlL, ChlN and ChlB. Forms a heterotetramer of two ChlB and two ChlN subunits. Requires [4Fe-4S] cluster as cofactor.

It catalyses the reaction chlorophyllide a + oxidized 2[4Fe-4S]-[ferredoxin] + 2 ADP + 2 phosphate = protochlorophyllide a + reduced 2[4Fe-4S]-[ferredoxin] + 2 ATP + 2 H2O. The protein operates within porphyrin-containing compound metabolism; chlorophyll biosynthesis (light-independent). Its function is as follows. Component of the dark-operative protochlorophyllide reductase (DPOR) that uses Mg-ATP and reduced ferredoxin to reduce ring D of protochlorophyllide (Pchlide) to form chlorophyllide a (Chlide). This reaction is light-independent. The NB-protein (ChlN-ChlB) is the catalytic component of the complex. This Synechococcus sp. (strain JA-3-3Ab) (Cyanobacteria bacterium Yellowstone A-Prime) protein is Light-independent protochlorophyllide reductase subunit N.